The following is a 732-amino-acid chain: Acylamino-acid-releasing enzyme (732 aa).

Met-1 bears the N-acetylmethionine mark. Ser-185 and Ser-187 each carry phosphoserine. Residues Ser-587, Asp-675, and His-707 each act as charge relay system in the active site.

The protein belongs to the peptidase S9C family. Homotetramer.

The protein resides in the cytoplasm. The enzyme catalyses Cleavage of an N-acetyl or N-formyl amino acid from the N-terminus of a polypeptide.. With respect to regulation, homotetramerization is required for activity. Tetramerization results in the formation of a gated channel which is involved in substrate selection and substrate access to the catalytic sites. This enzyme catalyzes the hydrolysis of the N-terminal peptide bond of an N-acetylated peptide to generate an N-acetylated amino acid and a peptide with a free N-terminus. It preferentially cleaves off Ac-Ala, Ac-Met and Ac-Ser. Also, involved in the degradation of oxidized and glycated proteins. In Mus musculus (Mouse), this protein is Acylamino-acid-releasing enzyme (Apeh).